We begin with the raw amino-acid sequence, 90 residues long: Small ribosomal subunit protein uS15c (90 aa).

As to quaternary structure, component of the chloroplast small ribosomal subunit (SSU). Mature 70S chloroplast ribosomes of higher plants consist of a small (30S) and a large (50S) subunit. The 30S small subunit contains 1 molecule of ribosomal RNA (16S rRNA) and 24 different proteins. The 50S large subunit contains 3 rRNA molecules (23S, 5S and 4.5S rRNA) and 33 different proteins.

The protein resides in the plastid. The protein localises to the chloroplast. In terms of biological role, component of the chloroplast ribosome (chloro-ribosome), a dedicated translation machinery responsible for the synthesis of chloroplast genome-encoded proteins, including proteins of the transcription and translation machinery and components of the photosynthetic apparatus. The polypeptide is Small ribosomal subunit protein uS15c (rps15) (Spinacia oleracea (Spinach)).